The chain runs to 538 residues: Tetracenomycin C resistance and export protein (538 aa).

A run of 14 helical transmembrane segments spans residues 28 to 48 (LLAVAVGVMMVALDSTIVAIA), 65 to 85 (WITNGYLLALAVSLITAGKLG), 100 to 120 (GFAVTSAAIGLSGSVAAIVVF), 126 to 146 (LFGALMQPSALGLLRVTFPPG), 154 to 174 (IWSGVVGASTAAGPIIGGLLV), 181 to 201 (AVFFINVPVGLAALVAGLVIL), 213 to 233 (FDVSGIVLLSGAMFCLVWGLI), 239 to 259 (GWGDLRTLGFLAAAVLAFAGF), 286 to 306 (VLMVLMAFSFIGGLFFVTFYL), 319 to 339 (VHLLPLTGMMIVGAPVSGIVI), 342 to 362 (FGPGGPLVVGMLLTAASLWGM), 371 to 391 (MGITSLWFVLLGLGLAPVMVG), 413 to 433 (QSAMQVGGSLGTAVLGVLMAS), and 494 to 514 (MGLAFTVAGAVALVAAAVALF).

This sequence belongs to the major facilitator superfamily. EmrB family.

The protein resides in the cell membrane. It functions in the pathway antibiotic biosynthesis; tetracenomycin C biosynthesis. Functionally, resistance to tetracenomycin C by an active tetracenomycin C efflux system which is probably energized by transmembrane electrochemical gradients. This chain is Tetracenomycin C resistance and export protein (tcmA), found in Streptomyces glaucescens.